The following is a 180-amino-acid chain: Large ribosomal subunit protein uL5 (180 aa).

It belongs to the universal ribosomal protein uL5 family. As to quaternary structure, part of the 50S ribosomal subunit; part of the 5S rRNA/L5/L18/L25 subcomplex. Contacts the 5S rRNA and the P site tRNA. Forms a bridge to the 30S subunit in the 70S ribosome.

Its function is as follows. This is one of the proteins that bind and probably mediate the attachment of the 5S RNA into the large ribosomal subunit, where it forms part of the central protuberance. In the 70S ribosome it contacts protein S13 of the 30S subunit (bridge B1b), connecting the 2 subunits; this bridge is implicated in subunit movement. Contacts the P site tRNA; the 5S rRNA and some of its associated proteins might help stabilize positioning of ribosome-bound tRNAs. This chain is Large ribosomal subunit protein uL5, found in Streptococcus pneumoniae (strain JJA).